The following is a 222-amino-acid chain: MVLAEDLECLKALALMGGMREPVFISSQTLGEVLETSPQTASRRLKALEGQRLISRTLNPDGQHITVTKEGEDGLRREYAEYCRLFAHEGGHYTLPGIVISGLGEGRYYMSLEPYKKQFLRHLGFEPYPGTLNLRLSGSDIPTRKKIDSLTWIPIHGFSAEGRTFGEVRCMPCRINDIPCGIVVPGRSHYPEDIVEVIAPVGLRDALGVKENDRVNVEVAYD.

The H-T-H motif-like stretch occupies residues 1–92 (MVLAEDLECL…CRLFAHEGGH (92 aa)). Residues 93 to 222 (YTLPGIVISG…DRVNVEVAYD (130 aa)) are riboflavin kinase. 102 to 107 (GLGEGR) is a CDP binding site. The Mg(2+) site is built by threonine 131 and asparagine 133. FMN is bound by residues serine 188 and glutamate 196. A CDP-binding site is contributed by 201–204 (VGLR).

The protein belongs to the archaeal riboflavin kinase family. Requires Mg(2+) as cofactor.

It carries out the reaction riboflavin + CTP = CDP + FMN + H(+). Its pathway is cofactor biosynthesis; FMN biosynthesis; FMN from riboflavin (CTP route): step 1/1. Its function is as follows. Catalyzes the CTP-dependent phosphorylation of riboflavin (vitamin B2) to form flavin mononucleotide (FMN). This is Riboflavin kinase (ribK) from Methanoregula boonei (strain DSM 21154 / JCM 14090 / 6A8).